Consider the following 409-residue polypeptide: Peptidase T (409 aa).

Zn(2+) is bound at residue His78. Asp80 is an active-site residue. Asp140 contributes to the Zn(2+) binding site. The Proton acceptor role is filled by Glu173. 3 residues coordinate Zn(2+): Glu174, Asp196, and His379.

The protein belongs to the peptidase M20B family. Zn(2+) is required as a cofactor.

Its subcellular location is the cytoplasm. It carries out the reaction Release of the N-terminal residue from a tripeptide.. Its function is as follows. Cleaves the N-terminal amino acid of tripeptides. In Salmonella agona (strain SL483), this protein is Peptidase T.